The following is a 603-amino-acid chain: Elongation factor 4 (603 aa).

The tr-type G domain maps to 7–189 (VRIRNFCIIA…AVVERIPPPP (183 aa)). Residues 19-24 (DHGKST) and 136-139 (NKID) each bind GTP.

It belongs to the TRAFAC class translation factor GTPase superfamily. Classic translation factor GTPase family. LepA subfamily.

It localises to the cell inner membrane. It catalyses the reaction GTP + H2O = GDP + phosphate + H(+). Functionally, required for accurate and efficient protein synthesis under certain stress conditions. May act as a fidelity factor of the translation reaction, by catalyzing a one-codon backward translocation of tRNAs on improperly translocated ribosomes. Back-translocation proceeds from a post-translocation (POST) complex to a pre-translocation (PRE) complex, thus giving elongation factor G a second chance to translocate the tRNAs correctly. Binds to ribosomes in a GTP-dependent manner. The sequence is that of Elongation factor 4 from Trichormus variabilis (strain ATCC 29413 / PCC 7937) (Anabaena variabilis).